A 450-amino-acid polypeptide reads, in one-letter code: Phosphoglucosamine mutase (450 aa).

Serine 107 acts as the Phosphoserine intermediate in catalysis. 4 residues coordinate Mg(2+): serine 107, aspartate 246, aspartate 248, and aspartate 250. Serine 107 carries the phosphoserine modification.

Belongs to the phosphohexose mutase family. Mg(2+) is required as a cofactor. Post-translationally, activated by phosphorylation.

It catalyses the reaction alpha-D-glucosamine 1-phosphate = D-glucosamine 6-phosphate. Functionally, catalyzes the conversion of glucosamine-6-phosphate to glucosamine-1-phosphate. In Aromatoleum aromaticum (strain DSM 19018 / LMG 30748 / EbN1) (Azoarcus sp. (strain EbN1)), this protein is Phosphoglucosamine mutase.